We begin with the raw amino-acid sequence, 48 residues long: Phospholipase A2 TI-Nh (48 aa).

His-25 is an active-site residue. Asp-26 is a binding site for Ca(2+).

This sequence belongs to the phospholipase A2 family. Group I subfamily. D49 sub-subfamily. As to quaternary structure, monomer. Ca(2+) serves as cofactor. As to expression, expressed by the venom gland.

It is found in the secreted. The enzyme catalyses a 1,2-diacyl-sn-glycero-3-phosphocholine + H2O = a 1-acyl-sn-glycero-3-phosphocholine + a fatty acid + H(+). Phospholipase A2 with weak enzymatic activity, which partially inhibits thrombin enzymatic activity (Ki=73 nM), completely inhibits thrombin-induced platelet aggregation and retards fibrin clot formation (IC(50)=0.2 nM). May exert this anticoagulant effect through a non-enzymatic mechanism. This Naja haje haje (Egyptian cobra) protein is Phospholipase A2 TI-Nh.